Reading from the N-terminus, the 1115-residue chain is Scavenger receptor cysteine-rich type 1 protein M130 (1115 aa).

The signal sequence occupies residues 1–46 (MDKLRMVLHENSGSADFRRCSAHLSSFTFAVVAVLSACLVTSSLGG). At 47 to 1044 (KDKELRLTGG…ESLHATGRSS (998 aa)) the chain is on the extracellular side. 9 consecutive SRCR domains span residues 51–151 (LRLT…VTCS), 158–258 (MGLV…VICL), 265–365 (LRVV…VTCS), 372–472 (LRLK…ITCS), 477–577 (PRLV…VVCS), 582–682 (IRLV…VICS), 718–818 (LRLV…VICS), 823–925 (LRLI…ITCA), and 928–1028 (IRLQ…VTCS). 23 cysteine pairs are disulfide-bonded: cysteine 76–cysteine 140, cysteine 89–cysteine 150, cysteine 120–cysteine 130, cysteine 183–cysteine 247, cysteine 196–cysteine 257, cysteine 227–cysteine 237, cysteine 290–cysteine 354, cysteine 303–cysteine 364, cysteine 334–cysteine 344, cysteine 397–cysteine 461, cysteine 410–cysteine 471, cysteine 441–cysteine 451, cysteine 502–cysteine 566, cysteine 515–cysteine 576, cysteine 546–cysteine 556, cysteine 607–cysteine 671, cysteine 620–cysteine 681, cysteine 651–cysteine 661, cysteine 743–cysteine 807, cysteine 756–cysteine 817, cysteine 787–cysteine 797, cysteine 863–cysteine 924, and cysteine 894–cysteine 904. Asparagine 105 is a glycosylation site (N-linked (GlcNAc...) asparagine). Asparagine 139 carries an N-linked (GlcNAc...) asparagine glycan. N-linked (GlcNAc...) asparagine glycosylation occurs at asparagine 936. Disulfide bonds link cysteine 953–cysteine 1017, cysteine 966–cysteine 1027, and cysteine 997–cysteine 1007. The helical transmembrane segment at 1045–1065 (FVALAIFGVILLACLIAFLIW) threads the bilayer. The Cytoplasmic portion of the chain corresponds to 1066–1115 (TQKRRQRQRLSVFSGGENSVHQIQYREMNSCLKADETDMLNPSGDHSEVQ). The short motif at 1090 to 1093 (YREM) is the Internalization signal element.

As to quaternary structure, interacts with CSNK2B. In terms of processing, a soluble form (sCD163) is produced by proteolytic shedding which can be induced by lipopolysaccharide, phorbol ester and Fc region of immunoglobulin gamma. This cleavage is dependent on protein kinase C and tyrosine kinases and can be blocked by protease inhibitors. The shedding is inhibited by the tissue inhibitor of metalloproteinase TIMP3, and thus probably induced by membrane-bound metalloproteinases ADAMs. Post-translationally, phosphorylated. In terms of tissue distribution, expressed in monocytes and macrophages. Detected only in one population of monocytes (CD163+) which is in advanced maturation stage.

Its subcellular location is the secreted. It is found in the cell membrane. In terms of biological role, involved in clearance and endocytosis of hemoglobin/haptoglobin complexes by macrophages and may thereby protect tissues from free hemoglobin-mediated oxidative damage. May play a role in the uptake and recycling of iron, via endocytosis of hemoglobin/haptoglobin and subsequent breakdown of heme. Binds hemoglobin/haptoglobin complexes in a calcium-dependent and pH-dependent manner. Induces a cascade of intracellular signals that involves tyrosine kinase-dependent calcium mobilization, inositol triphosphate production and secretion of IL6 and CSF1. May play a role in the process of infection of porcine monocytes/macrophages by African swine fever virus (ASFV). In case of porcine reproductive and respiratory syndrome virus (PRRSV), serves mediates virion attachment and plays a role in viral entry. Its function is as follows. After shedding, the soluble form (sCD163) may play an anti-inflammatory role. This Sus scrofa (Pig) protein is Scavenger receptor cysteine-rich type 1 protein M130 (CD163).